A 468-amino-acid chain; its full sequence is ATP synthase subunit beta (468 aa).

155 to 162 (GGAGVGKT) contacts ATP.

This sequence belongs to the ATPase alpha/beta chains family. As to quaternary structure, F-type ATPases have 2 components, CF(1) - the catalytic core - and CF(0) - the membrane proton channel. CF(1) has five subunits: alpha(3), beta(3), gamma(1), delta(1), epsilon(1). CF(0) has three main subunits: a(1), b(2) and c(9-12). The alpha and beta chains form an alternating ring which encloses part of the gamma chain. CF(1) is attached to CF(0) by a central stalk formed by the gamma and epsilon chains, while a peripheral stalk is formed by the delta and b chains.

The protein resides in the cell inner membrane. The enzyme catalyses ATP + H2O + 4 H(+)(in) = ADP + phosphate + 5 H(+)(out). In terms of biological role, produces ATP from ADP in the presence of a proton gradient across the membrane. The catalytic sites are hosted primarily by the beta subunits. The chain is ATP synthase subunit beta from Leptospira biflexa serovar Patoc (strain Patoc 1 / ATCC 23582 / Paris).